A 548-amino-acid chain; its full sequence is Glucose-6-phosphate isomerase (548 aa).

Glutamate 353 serves as the catalytic Proton donor. Residues histidine 384 and lysine 512 contribute to the active site.

The protein belongs to the GPI family.

It is found in the cytoplasm. It carries out the reaction alpha-D-glucose 6-phosphate = beta-D-fructose 6-phosphate. Its pathway is carbohydrate biosynthesis; gluconeogenesis. The protein operates within carbohydrate degradation; glycolysis; D-glyceraldehyde 3-phosphate and glycerone phosphate from D-glucose: step 2/4. In terms of biological role, catalyzes the reversible isomerization of glucose-6-phosphate to fructose-6-phosphate. This chain is Glucose-6-phosphate isomerase, found in Pseudoalteromonas translucida (strain TAC 125).